Consider the following 590-residue polypeptide: Probable lysosomal cobalamin transporter (590 aa).

10 helical membrane-spanning segments follow: residues 8-28, 46-66, 94-114, 145-165, 190-210, 314-334, 348-367, 376-396, 421-441, and 508-528; these read LIWV…SIFI, IFTL…VALV, AVAY…VVPF, TVAF…VPIG, ALTF…VLYT, LLSG…MLLT, CGYI…VFVH, YILF…GIAT, ITTV…SMVV, and FFGI…LLVF. The disordered stretch occupies residues 567 to 590; it reads WEDITGRASRSPQVSGSAGRGTRE.

Belongs to the LIMR family. LMBRD1 subfamily.

The protein localises to the lysosome membrane. Its function is as follows. Probable lysosomal cobalamin transporter. Required to export cobalamin from lysosomes allowing its conversion to cofactors. This Ajellomyces capsulatus (strain NAm1 / WU24) (Darling's disease fungus) protein is Probable lysosomal cobalamin transporter.